A 391-amino-acid chain; its full sequence is Serpin-ZX (391 aa).

The tract at residues glycine 337–aspartate 361 is RCL. Asparagine 375 carries an N-linked (GlcNAc...) asparagine glycan.

Belongs to the serpin family. Interacts with RD21A. Expressed in root tips. Expressed in siliques (at protein level).

It is found in the secreted. It localises to the extracellular space. Its subcellular location is the apoplast. The protein resides in the cytoplasm. Functionally, inhibits metacaspase-9 (MC9) cysteine protease. Functions through cleavage of its reactive center loop and covalent binding to MC9. Involved in the control of elicitor-stimulated programmed cell death (PCD). During infection by the necrotrophic fungal pathogen Botrytis cinerea, functions to protect cells by limiting the PCD-promoting protease RD21A activity that is released from the ER body or vacuole to the cytoplasm. Involved in the control of water stress-induced cell death by limiting the pro-death protease RD21A activity that is released from the vacuole to the cytoplasm. In Arabidopsis thaliana (Mouse-ear cress), this protein is Serpin-ZX.